A 353-amino-acid polypeptide reads, in one-letter code: D-alanine--D-alanine ligase (353 aa).

The ATP-grasp domain occupies 141 to 349 (KAAFAAAGLP…LPDLVAQLVH (209 aa)). 176–231 (EAELGYPCFVKPANMGSSVGISKARHRDQLLAGLKEAARHDTRLVVEHGVSARELE) lines the ATP pocket. Positions 302, 316, and 318 each coordinate Mg(2+).

This sequence belongs to the D-alanine--D-alanine ligase family. The cofactor is Mg(2+). Requires Mn(2+) as cofactor.

It localises to the cytoplasm. The enzyme catalyses 2 D-alanine + ATP = D-alanyl-D-alanine + ADP + phosphate + H(+). It functions in the pathway cell wall biogenesis; peptidoglycan biosynthesis. Cell wall formation. This Synechococcus sp. (strain CC9311) protein is D-alanine--D-alanine ligase.